The following is a 518-amino-acid chain: NADH-quinone oxidoreductase subunit N (518 aa).

Helical transmembrane passes span 18–38 (FRPE…DLVF), 45–65 (VALL…LLAI), 82–102 (AFAI…VIIA), 113–133 (IGQF…MASA), 136–156 (LLMV…LAGF), 171–191 (VIYG…LYGL), 220–240 (VALV…VAAV), 254–274 (PTPF…ALAI), 295–315 (LAGI…MTLG), 328–348 (LLAY…SAVS), 355–375 (VMIY…VVIL), 399–419 (AVAF…AGFV), 439–459 (WYAW…YYYV), and 486–506 (VMLG…TPMV).

It belongs to the complex I subunit 2 family. As to quaternary structure, NDH-1 is composed of 14 different subunits. Subunits NuoA, H, J, K, L, M, N constitute the membrane sector of the complex.

The protein resides in the cell inner membrane. It catalyses the reaction a quinone + NADH + 5 H(+)(in) = a quinol + NAD(+) + 4 H(+)(out). Its function is as follows. NDH-1 shuttles electrons from NADH, via FMN and iron-sulfur (Fe-S) centers, to quinones in the respiratory chain. The immediate electron acceptor for the enzyme in this species is believed to be ubiquinone. Couples the redox reaction to proton translocation (for every two electrons transferred, four hydrogen ions are translocated across the cytoplasmic membrane), and thus conserves the redox energy in a proton gradient. This is NADH-quinone oxidoreductase subunit N from Anaeromyxobacter sp. (strain Fw109-5).